Here is a 476-residue protein sequence, read N- to C-terminus: Ribulose bisphosphate carboxylase large chain (476 aa).

Positions 1-2 (MS) are excised as a propeptide. The residue at position 3 (Pro3) is an N-acetylproline. An N6,N6,N6-trimethyllysine modification is found at Lys14. Substrate-binding residues include Asn123 and Thr173. Lys175 functions as the Proton acceptor in the catalytic mechanism. Lys177 provides a ligand contact to substrate. Positions 201, 203, and 204 each coordinate Mg(2+). Lys201 carries the post-translational modification N6-carboxylysine. The substrate site is built by Arg295, His327, and Ser379.

It belongs to the RuBisCO large chain family. Type I subfamily. As to quaternary structure, heterohexadecamer of 8 large chains and 8 small chains; disulfide-linked. The disulfide link is formed within the large subunit homodimers. Mg(2+) is required as a cofactor. The disulfide bond which can form in the large chain dimeric partners within the hexadecamer appears to be associated with oxidative stress and protein turnover.

Its subcellular location is the plastid. The protein localises to the chloroplast. The enzyme catalyses 2 (2R)-3-phosphoglycerate + 2 H(+) = D-ribulose 1,5-bisphosphate + CO2 + H2O. The catalysed reaction is D-ribulose 1,5-bisphosphate + O2 = 2-phosphoglycolate + (2R)-3-phosphoglycerate + 2 H(+). RuBisCO catalyzes two reactions: the carboxylation of D-ribulose 1,5-bisphosphate, the primary event in carbon dioxide fixation, as well as the oxidative fragmentation of the pentose substrate in the photorespiration process. Both reactions occur simultaneously and in competition at the same active site. In Barnadesia caryophylla (Xenophontia caryophylla), this protein is Ribulose bisphosphate carboxylase large chain.